Reading from the N-terminus, the 663-residue chain is Bifunctional polymyxin resistance protein ArnA (663 aa).

Positions 1 to 307 (MSSKAVVFAY…ELGLVDGSVL (307 aa)) are formyltransferase ArnAFT. His-106 serves as the catalytic Proton donor; for formyltransferase activity. (6R)-10-formyltetrahydrofolate contacts are provided by residues Arg-116 and 138–142 (VKRAD). The interval 317-663 (RRTRVLILGV…EAMLEIADKK (347 aa)) is dehydrogenase ArnADH. NAD(+)-binding positions include Asp-350 and 371–372 (DI). UDP-alpha-D-glucuronate-binding positions include Ala-396, Tyr-401, and 435 to 436 (TS). Glu-437 acts as the Proton acceptor; for decarboxylase activity in catalysis. Residues Arg-463, Asn-494, 528–537 (RLFDGGEQKR), and Tyr-615 each bind UDP-alpha-D-glucuronate. The active-site Proton donor; for decarboxylase activity is Arg-621.

This sequence in the N-terminal section; belongs to the Fmt family. UDP-L-Ara4N formyltransferase subfamily. In the C-terminal section; belongs to the NAD(P)-dependent epimerase/dehydratase family. UDP-glucuronic acid decarboxylase subfamily. In terms of assembly, homohexamer, formed by a dimer of trimers.

It catalyses the reaction UDP-alpha-D-glucuronate + NAD(+) = UDP-beta-L-threo-pentopyranos-4-ulose + CO2 + NADH. The catalysed reaction is UDP-4-amino-4-deoxy-beta-L-arabinose + (6R)-10-formyltetrahydrofolate = UDP-4-deoxy-4-formamido-beta-L-arabinose + (6S)-5,6,7,8-tetrahydrofolate + H(+). Its pathway is nucleotide-sugar biosynthesis; UDP-4-deoxy-4-formamido-beta-L-arabinose biosynthesis; UDP-4-deoxy-4-formamido-beta-L-arabinose from UDP-alpha-D-glucuronate: step 1/3. The protein operates within nucleotide-sugar biosynthesis; UDP-4-deoxy-4-formamido-beta-L-arabinose biosynthesis; UDP-4-deoxy-4-formamido-beta-L-arabinose from UDP-alpha-D-glucuronate: step 3/3. It participates in bacterial outer membrane biogenesis; lipopolysaccharide biosynthesis. Functionally, bifunctional enzyme that catalyzes the oxidative decarboxylation of UDP-glucuronic acid (UDP-GlcUA) to UDP-4-keto-arabinose (UDP-Ara4O) and the addition of a formyl group to UDP-4-amino-4-deoxy-L-arabinose (UDP-L-Ara4N) to form UDP-L-4-formamido-arabinose (UDP-L-Ara4FN). The modified arabinose is attached to lipid A and is required for resistance to polymyxin and cationic antimicrobial peptides. The chain is Bifunctional polymyxin resistance protein ArnA from Pseudomonas fluorescens (strain SBW25).